The following is a 377-amino-acid chain: Actin-related protein T2 (377 aa).

The protein belongs to the actin family.

It localises to the cytoplasm. It is found in the cytoskeleton. This Homo sapiens (Human) protein is Actin-related protein T2 (ACTRT2).